We begin with the raw amino-acid sequence, 498 residues long: ATP synthase subunit alpha 1 (498 aa).

The protein belongs to the ATPase alpha/beta chains family. F-type ATPases have 2 components, CF(1) - the catalytic core - and CF(0) - the membrane proton channel. CF(1) has five subunits: alpha(3), beta(3), gamma(1), delta(1), epsilon(1). CF(0) has three main subunits: a(1), b(2) and c(9-12). The alpha and beta chains form an alternating ring which encloses part of the gamma chain. CF(1) is attached to CF(0) by a central stalk formed by the gamma and epsilon chains, while a peripheral stalk is formed by the delta and b chains.

Its subcellular location is the cell membrane. It catalyses the reaction ATP + H2O + 4 H(+)(in) = ADP + phosphate + 5 H(+)(out). In terms of biological role, produces ATP from ADP in the presence of a proton gradient across the membrane. The alpha chain is a regulatory subunit. This is ATP synthase subunit alpha 1 from Listeria monocytogenes serotype 4b (strain F2365).